The sequence spans 292 residues: 2-(5''-triphosphoribosyl)-3'-dephosphocoenzyme-A synthase (292 aa).

The protein belongs to the CitG/MdcB family.

It catalyses the reaction 3'-dephospho-CoA + ATP = 2'-(5''-triphospho-alpha-D-ribosyl)-3'-dephospho-CoA + adenine. Catalyzes the formation of 2-(5''-triphosphoribosyl)-3'-dephosphocoenzyme-A, the precursor of the prosthetic group of the holo-acyl carrier protein (gamma chain) of citrate lyase, from ATP and dephospho-CoA. The polypeptide is 2-(5''-triphosphoribosyl)-3'-dephosphocoenzyme-A synthase (Escherichia coli O139:H28 (strain E24377A / ETEC)).